A 154-amino-acid polypeptide reads, in one-letter code: NADPH-dependent 7-cyano-7-deazaguanine reductase (154 aa).

The segment covering Met-1–Glu-23 has biased composition (polar residues). Residues Met-1–Val-26 form a disordered region. Catalysis depends on Cys-52, which acts as the Thioimide intermediate. The active-site Proton donor is the Asp-59. Substrate is bound by residues Val-74–Ser-76 and His-93–Glu-94.

This sequence belongs to the GTP cyclohydrolase I family. QueF type 1 subfamily.

The protein localises to the cytoplasm. The catalysed reaction is 7-aminomethyl-7-carbaguanine + 2 NADP(+) = 7-cyano-7-deazaguanine + 2 NADPH + 3 H(+). The protein operates within tRNA modification; tRNA-queuosine biosynthesis. Functionally, catalyzes the NADPH-dependent reduction of 7-cyano-7-deazaguanine (preQ0) to 7-aminomethyl-7-deazaguanine (preQ1). In Rhizobium leguminosarum bv. trifolii (strain WSM2304), this protein is NADPH-dependent 7-cyano-7-deazaguanine reductase.